Here is a 471-residue protein sequence, read N- to C-terminus: V-type ATP synthase beta chain (471 aa).

Belongs to the ATPase alpha/beta chains family.

In terms of biological role, produces ATP from ADP in the presence of a proton gradient across the membrane. The V-type beta chain is a regulatory subunit. In Streptococcus pyogenes serotype M12 (strain MGAS2096), this protein is V-type ATP synthase beta chain.